The sequence spans 210 residues: Large ribosomal subunit protein uL3 (210 aa).

Residues 131–165 (GPMSHGSKYHRRVGSMGATTDPGRTFKGKKMPGRM) form a disordered region.

The protein belongs to the universal ribosomal protein uL3 family. In terms of assembly, part of the 50S ribosomal subunit. Forms a cluster with proteins L14 and L19.

Its function is as follows. One of the primary rRNA binding proteins, it binds directly near the 3'-end of the 23S rRNA, where it nucleates assembly of the 50S subunit. This is Large ribosomal subunit protein uL3 from Caldanaerobacter subterraneus subsp. tengcongensis (strain DSM 15242 / JCM 11007 / NBRC 100824 / MB4) (Thermoanaerobacter tengcongensis).